We begin with the raw amino-acid sequence, 215 residues long: Probable nicotinate-nucleotide adenylyltransferase (215 aa).

It belongs to the NadD family.

The catalysed reaction is nicotinate beta-D-ribonucleotide + ATP + H(+) = deamido-NAD(+) + diphosphate. It participates in cofactor biosynthesis; NAD(+) biosynthesis; deamido-NAD(+) from nicotinate D-ribonucleotide: step 1/1. Its function is as follows. Catalyzes the reversible adenylation of nicotinate mononucleotide (NaMN) to nicotinic acid adenine dinucleotide (NaAD). This chain is Probable nicotinate-nucleotide adenylyltransferase, found in Shewanella putrefaciens (strain CN-32 / ATCC BAA-453).